The sequence spans 287 residues: UPF0354 protein SSP1020 (287 aa).

It belongs to the UPF0354 family.

In Staphylococcus saprophyticus subsp. saprophyticus (strain ATCC 15305 / DSM 20229 / NCIMB 8711 / NCTC 7292 / S-41), this protein is UPF0354 protein SSP1020.